A 161-amino-acid polypeptide reads, in one-letter code: Protein ilm1 (161 aa).

The Cytoplasmic portion of the chain corresponds to 1 to 6 (MLFSFR). Residues 7 to 27 (AIVLFYCCMLTFAGIGFLWNP) form a helical membrane-spanning segment. At 28-56 (KFVVESGLVALIGASMEVKPLIVTQDNLS) the chain is on the lumenal side. Residues 57–77 (TLALSGLVFLILGMIYTISLL) traverse the membrane as a helical segment. Topologically, residues 78 to 81 (QSNF) are cytoplasmic. A helical membrane pass occupies residues 82 to 102 (LFFSGITPIRAIFDFILTGFI). Topologically, residues 103–112 (YLKKEHIASN) are lumenal. The helical transmembrane segment at 113–133 (SLTFTFAFCDLMWQFWMFAAM) threads the bilayer. The Cytoplasmic portion of the chain corresponds to 134-161 (SEERAKYLKNQKKAEELAARKAREVEES).

The protein belongs to the ILM1 family.

Its subcellular location is the endoplasmic reticulum. The protein localises to the membrane. The protein is Protein ilm1 of Schizosaccharomyces pombe (strain 972 / ATCC 24843) (Fission yeast).